A 731-amino-acid chain; its full sequence is Putative pentatricopeptide repeat-containing protein At1g17630 (731 aa).

PPR repeat units lie at residues 88–118 (SGSL…VSLV), 122–156 (DLRL…GLTG), 157–191 (DGYI…GLKE), 192–222 (NLHV…MPVR), 223–257 (NRMS…EFKP), 258–292 (DEVT…GNAV), 293–327 (SGEA…GFEE), 328–358 (YLPS…IRNK), 359–393 (GIES…NHVC), 398–432 (NVVT…KVLA), 433–467 (NSVT…SMSE), 468–498 (NILV…IRDK), 499–533 (DLIS…GFHP), 534–569 (DGIA…GLEP), and 570–600 (QQEH…MPME). Residues 605 to 680 (VLGALLNSCR…VSGSSWIEVK (76 aa)) form a type E motif region. The interval 681 to 711 (KKKYKFSSGSIVQSEFETIYPVLEDLVSHML) is type E(+) motif.

It belongs to the PPR family. PCMP-E subfamily.

The polypeptide is Putative pentatricopeptide repeat-containing protein At1g17630 (PCMP-E72) (Arabidopsis thaliana (Mouse-ear cress)).